We begin with the raw amino-acid sequence, 128 residues long: Flagellar hook-basal body complex protein FliE (128 aa).

The segment at 1–60 (MRPVASFRPPPTFSALQGGASSQATKTAGIDQRGTNQAFSLLDPQSTQSNSTDSSFGEMG) is disordered. The segment covering 33-55 (RGTNQAFSLLDPQSTQSNSTDSS) has biased composition (polar residues).

The protein belongs to the FliE family.

Its subcellular location is the bacterial flagellum basal body. This Rhodopirellula baltica (strain DSM 10527 / NCIMB 13988 / SH1) protein is Flagellar hook-basal body complex protein FliE.